A 459-amino-acid polypeptide reads, in one-letter code: Argininosuccinate lyase (459 aa).

It belongs to the lyase 1 family. Argininosuccinate lyase subfamily.

It is found in the cytoplasm. The catalysed reaction is 2-(N(omega)-L-arginino)succinate = fumarate + L-arginine. Its pathway is amino-acid biosynthesis; L-arginine biosynthesis; L-arginine from L-ornithine and carbamoyl phosphate: step 3/3. The chain is Argininosuccinate lyase from Lactococcus lactis subsp. cremoris (strain MG1363).